The sequence spans 95 residues: Phosphoribosyl-ATP pyrophosphatase (95 aa).

This sequence belongs to the PRA-PH family.

It localises to the cytoplasm. It carries out the reaction 1-(5-phospho-beta-D-ribosyl)-ATP + H2O = 1-(5-phospho-beta-D-ribosyl)-5'-AMP + diphosphate + H(+). It functions in the pathway amino-acid biosynthesis; L-histidine biosynthesis; L-histidine from 5-phospho-alpha-D-ribose 1-diphosphate: step 2/9. The sequence is that of Phosphoribosyl-ATP pyrophosphatase from Methanocella arvoryzae (strain DSM 22066 / NBRC 105507 / MRE50).